The primary structure comprises 382 residues: Mannosyl phosphorylinositol ceramide synthase SUR1 (382 aa).

The Cytoplasmic segment spans residues 1-6 (MRKELK). The helical transmembrane segment at 7 to 27 (YLICFNILLLLSIIYYTFDLL) threads the bilayer. The Extracellular portion of the chain corresponds to 28-269 (TLCIDDTVKD…KALENHILSC (242 aa)). Residues 270 to 290 (VVTGFIFGFFILYGEFTFYCW) traverse the membrane as a helical segment. Over 291 to 382 (LCSKNFSNLT…SKYSLGNNSS (92 aa)) the chain is Cytoplasmic. Serine 349 carries the phosphoserine modification.

It belongs to the glycosyltransferase 32 family. Heterodimer of SUR1 and CSG2.

The protein localises to the membrane. The enzyme catalyses a 1D-myo-inositol-1-phospho-N-[(R)-2-hydroxy-very-long-chain fatty acyl]-(R)-4-hydroxysphingoid base + GDP-alpha-D-mannose = an alpha-D-mannosyl-(1&lt;-&gt;6)-1D-myo-inositol-1-phospho-N-[(R)-2-hydroxy-very-long-chain fatty acyl]-(R)-4-hydroxysphingoid base + GDP + H(+). Functionally, involved in the synthesis of mannosyl phosphorylinositol ceramide. Catalyzes the addition of mannosyl to phosphorylinositol ceramide. Suppressor of RVS161 mutation. The sequence is that of Mannosyl phosphorylinositol ceramide synthase SUR1 from Saccharomyces cerevisiae (strain ATCC 204508 / S288c) (Baker's yeast).